The following is a 259-amino-acid chain: uncharacterized protein (259 aa).

The stretch at 82–128 (NSGMAETIEEKREDFQKEEKEDFTEEQNIEDLLAAVADAEGRYQTNQ) forms a coiled coil. The interval 192-259 (LIQTQNQHPR…SSSRNSSTTS (68 aa)) is disordered. Basic residues predominate over residues 228-240 (KKVHARSRKRRKT). A compositionally biased stretch (low complexity) spans 241 to 259 (SSSSSSSSSSSSRNSSTTS).

This is an uncharacterized protein from Homo sapiens (Human).